We begin with the raw amino-acid sequence, 419 residues long: MQTYLVGGAVRDQLLNLPVKDRDWVVVGATPEQLLSLGYQQVGRDFPVFLHPKTKEEYALARTERKSGAGYTGFICDFSPHISLEQDLIRRDLTINAIAQDNQGKFIDPYEGISDLKNRTLRHISPAFAEDPLRVLRVARFAARYHQLDFSIAPETIALMAEITEKGELQQLTIERVWQETEKALKEKNPEIYFQVLLQVGALKILFPELYALYGVPNPAQYHPEIDSFLHTMLVLQQAVRLTENTEFNKSAVRFAAICHDLGKALTPKDILPHHYGHEKAGIQPIRTLSNRLKVPTYYKELAEFTCEYHSYIHKAFELKPETVIKLFNKLDVWRKPQRFEELMLVCVADTRGRTGFEQTAYPQKDYLRQLYQTALQVNVQQVIEDGFEKQGIRDELTRRRTIAVKTKKAEILPRFVGQ.

Residues Gly8 and Arg11 each coordinate ATP. CTP-binding residues include Gly8 and Arg11. Residues Asp21 and Asp23 each coordinate Mg(2+). Positions 91, 137, and 140 each coordinate ATP. Arg91, Arg137, and Arg140 together coordinate CTP. In terms of domain architecture, HD spans Ser228–Trp334.

The protein belongs to the tRNA nucleotidyltransferase/poly(A) polymerase family. Bacterial CCA-adding enzyme type 1 subfamily. As to quaternary structure, monomer. Can also form homodimers and oligomers. Mg(2+) is required as a cofactor. Requires Ni(2+) as cofactor.

The enzyme catalyses a tRNA precursor + 2 CTP + ATP = a tRNA with a 3' CCA end + 3 diphosphate. It carries out the reaction a tRNA with a 3' CCA end + 2 CTP + ATP = a tRNA with a 3' CCACCA end + 3 diphosphate. In terms of biological role, catalyzes the addition and repair of the essential 3'-terminal CCA sequence in tRNAs without using a nucleic acid template. Adds these three nucleotides in the order of C, C, and A to the tRNA nucleotide-73, using CTP and ATP as substrates and producing inorganic pyrophosphate. tRNA 3'-terminal CCA addition is required both for tRNA processing and repair. Also involved in tRNA surveillance by mediating tandem CCA addition to generate a CCACCA at the 3' terminus of unstable tRNAs. While stable tRNAs receive only 3'-terminal CCA, unstable tRNAs are marked with CCACCA and rapidly degraded. The sequence is that of Multifunctional CCA protein from Mannheimia succiniciproducens (strain KCTC 0769BP / MBEL55E).